We begin with the raw amino-acid sequence, 64 residues long: Prokaryotic ubiquitin-like protein Pup (64 aa).

The disordered stretch occupies residues 1–35 (MAQGGQVSAGGGRRDDDEPIEQTSGAGTQQVNVTG). Polar residues predominate over residues 21–33 (EQTSGAGTQQVNV). The segment at 21–58 (EQTSGAGTQQVNVTGTDDLLDEIDGLLENNAEEFVRSY) is ARC ATPase binding. At Gln-64 the chain carries Deamidated glutamine. Residue Gln-64 forms an Isoglutamyl lysine isopeptide (Gln-Lys) (interchain with K-? in acceptor proteins) linkage.

It belongs to the prokaryotic ubiquitin-like protein family. As to quaternary structure, strongly interacts with the proteasome-associated ATPase ARC through a hydrophobic interface; the interacting region of Pup lies in its C-terminal half. There is one Pup binding site per ARC hexamer ring. In terms of processing, is modified by deamidation of its C-terminal glutamine to glutamate by the deamidase Dop, a prerequisite to the subsequent pupylation process.

The protein operates within protein degradation; proteasomal Pup-dependent pathway. Functionally, protein modifier that is covalently attached to lysine residues of substrate proteins, thereby targeting them for proteasomal degradation. The tagging system is termed pupylation. This is Prokaryotic ubiquitin-like protein Pup from Corynebacterium jeikeium (strain K411).